The sequence spans 282 residues: NADH-ubiquinone oxidoreductase chain 2 (282 aa).

The next 7 helical transmembrane spans lie at 17–37, 58–78, 87–107, 115–135, 166–186, 202–222, and 232–252; these read ILTN…VVFI, SLGL…IILL, FWIF…FLTF, ILLQ…LLIC, FSMF…VLLI, TTLV…IFSL, and FTLF…FWLI.

It belongs to the complex I subunit 2 family.

Its subcellular location is the mitochondrion inner membrane. The enzyme catalyses a ubiquinone + NADH + 5 H(+)(in) = a ubiquinol + NAD(+) + 4 H(+)(out). In terms of biological role, core subunit of the mitochondrial membrane respiratory chain NADH dehydrogenase (Complex I) that is believed to belong to the minimal assembly required for catalysis. Complex I functions in the transfer of electrons from NADH to the respiratory chain. The immediate electron acceptor for the enzyme is believed to be ubiquinone. In Caenorhabditis elegans, this protein is NADH-ubiquinone oxidoreductase chain 2.